The chain runs to 81 residues: Cytochrome c oxidase subunit 7B2, mitochondrial (81 aa).

A mitochondrion-targeting transit peptide spans 1–25; that stretch reads MMFPLARNALSSLKIQSILQSMARH. The Mitochondrial matrix portion of the chain corresponds to 26–33; that stretch reads SHVKHSPD. Residues 34-60 traverse the membrane as a helical segment; it reads FHDKYGNAVLASGTAFCVATWVFTATQ. Topologically, residues 61 to 81 are mitochondrial intermembrane; the sequence is IGIEWNLSPVGRVTPKEWKHQ.

The protein belongs to the cytochrome c oxidase VIIb family. In terms of assembly, component of the cytochrome c oxidase (complex IV, CIV), a multisubunit enzyme composed of 14 subunits. The complex is composed of a catalytic core of 3 subunits MT-CO1, MT-CO2 and MT-CO3, encoded in the mitochondrial DNA, and 11 supernumerary subunits COX4I, COX5A, COX5B, COX6A, COX6B, COX6C, COX7A, COX7B, COX7C, COX8 and NDUFA4, which are encoded in the nuclear genome. The complex exists as a monomer or a dimer and forms supercomplexes (SCs) in the inner mitochondrial membrane with NADH-ubiquinone oxidoreductase (complex I, CI) and ubiquinol-cytochrome c oxidoreductase (cytochrome b-c1 complex, complex III, CIII), resulting in different assemblies (supercomplex SCI(1)III(2)IV(1) and megacomplex MCI(2)III(2)IV(2)).

It is found in the mitochondrion inner membrane. It participates in energy metabolism; oxidative phosphorylation. Component of the cytochrome c oxidase, the last enzyme in the mitochondrial electron transport chain which drives oxidative phosphorylation. The respiratory chain contains 3 multisubunit complexes succinate dehydrogenase (complex II, CII), ubiquinol-cytochrome c oxidoreductase (cytochrome b-c1 complex, complex III, CIII) and cytochrome c oxidase (complex IV, CIV), that cooperate to transfer electrons derived from NADH and succinate to molecular oxygen, creating an electrochemical gradient over the inner membrane that drives transmembrane transport and the ATP synthase. Cytochrome c oxidase is the component of the respiratory chain that catalyzes the reduction of oxygen to water. Electrons originating from reduced cytochrome c in the intermembrane space (IMS) are transferred via the dinuclear copper A center (CU(A)) of subunit 2 and heme A of subunit 1 to the active site in subunit 1, a binuclear center (BNC) formed by heme A3 and copper B (CU(B)). The BNC reduces molecular oxygen to 2 water molecules using 4 electrons from cytochrome c in the IMS and 4 protons from the mitochondrial matrix. This is Cytochrome c oxidase subunit 7B2, mitochondrial (COX7B2) from Homo sapiens (Human).